The sequence spans 251 residues: uncharacterized protein (251 aa).

This is an uncharacterized protein from Homo sapiens (Human).